We begin with the raw amino-acid sequence, 366 residues long: Chorismate synthase (366 aa).

Residues R48 and R54 each contribute to the NADP(+) site. Residues 125-127 (RSS), 238-239 (NA), G278, 293-297 (KPTSS), and R319 contribute to the FMN site.

Belongs to the chorismate synthase family. As to quaternary structure, homotetramer. Requires FMNH2 as cofactor.

The enzyme catalyses 5-O-(1-carboxyvinyl)-3-phosphoshikimate = chorismate + phosphate. The protein operates within metabolic intermediate biosynthesis; chorismate biosynthesis; chorismate from D-erythrose 4-phosphate and phosphoenolpyruvate: step 7/7. Catalyzes the anti-1,4-elimination of the C-3 phosphate and the C-6 proR hydrogen from 5-enolpyruvylshikimate-3-phosphate (EPSP) to yield chorismate, which is the branch point compound that serves as the starting substrate for the three terminal pathways of aromatic amino acid biosynthesis. This reaction introduces a second double bond into the aromatic ring system. This chain is Chorismate synthase, found in Ralstonia nicotianae (strain ATCC BAA-1114 / GMI1000) (Ralstonia solanacearum).